We begin with the raw amino-acid sequence, 591 residues long: Aspartate--tRNA ligase (591 aa).

Glutamate 171 contributes to the L-aspartate binding site. The interval 195-198 (QLFK) is aspartate. Arginine 217 contacts L-aspartate. ATP contacts are provided by residues 217-219 (RDE) and glutamine 226. L-aspartate is bound at residue histidine 448. Glutamate 482 is a binding site for ATP. Residue arginine 489 coordinates L-aspartate. 534–537 (GLDR) lines the ATP pocket.

This sequence belongs to the class-II aminoacyl-tRNA synthetase family. Type 1 subfamily. Homodimer.

It is found in the cytoplasm. It carries out the reaction tRNA(Asp) + L-aspartate + ATP = L-aspartyl-tRNA(Asp) + AMP + diphosphate. In terms of biological role, catalyzes the attachment of L-aspartate to tRNA(Asp) in a two-step reaction: L-aspartate is first activated by ATP to form Asp-AMP and then transferred to the acceptor end of tRNA(Asp). The protein is Aspartate--tRNA ligase of Aliivibrio salmonicida (strain LFI1238) (Vibrio salmonicida (strain LFI1238)).